Reading from the N-terminus, the 222-residue chain is Type II restriction enzyme AbrI (222 aa).

Disordered regions lie at residues 21 to 45 (GNREKARQKQQESGKPDQGERRRDR) and 161 to 222 (NQRR…SPRI). Positions 22–42 (NREKARQKQQESGKPDQGERR) are enriched in basic and acidic residues. Residues 188-202 (SSASGSSRSSFTPRP) are compositionally biased toward low complexity.

It belongs to the XhoI type II restriction endonuclease family.

The catalysed reaction is Endonucleolytic cleavage of DNA to give specific double-stranded fragments with terminal 5'-phosphates.. In terms of biological role, a P subtype restriction enzyme that recognizes the double-stranded sequence 5'-CTCGAG-3' and cleaves after C-1. The polypeptide is Type II restriction enzyme AbrI (abrIR) (Azospirillum brasilense).